The sequence spans 375 residues: Glucokinase 1 (375 aa).

An ATP-binding site is contributed by 25–30; that stretch reads CDVGGS.

This sequence belongs to the bacterial glucokinase family. Monomer. The N-terminus is blocked.

It carries out the reaction D-glucose + ATP = D-glucose 6-phosphate + ADP + H(+). This is Glucokinase 1 (GK1) from Trichomonas vaginalis.